A 99-amino-acid polypeptide reads, in one-letter code: Small ribosomal subunit protein bS16 (99 aa).

Residues 80–99 (PPRQQNEAKRETAETAQPEA) are disordered.

The protein belongs to the bacterial ribosomal protein bS16 family.

This is Small ribosomal subunit protein bS16 from Thermomicrobium roseum (strain ATCC 27502 / DSM 5159 / P-2).